Consider the following 372-residue polypeptide: Spermidine/putrescine import ATP-binding protein PotA (372 aa).

Residues 12–250 (VSIRSVRKVY…PRNRFVADFI (239 aa)) enclose the ABC transporter domain. 48–55 (GPSGCGKT) contributes to the ATP binding site.

Belongs to the ABC transporter superfamily. Spermidine/putrescine importer (TC 3.A.1.11.1) family. As to quaternary structure, the complex is composed of two ATP-binding proteins (PotA), two transmembrane proteins (PotB and PotC) and a solute-binding protein (PotD).

The protein localises to the cell inner membrane. The catalysed reaction is ATP + H2O + polyamine-[polyamine-binding protein]Side 1 = ADP + phosphate + polyamineSide 2 + [polyamine-binding protein]Side 1.. Its function is as follows. Part of the ABC transporter complex PotABCD involved in spermidine/putrescine import. Responsible for energy coupling to the transport system. This is Spermidine/putrescine import ATP-binding protein PotA from Pseudomonas fluorescens (strain ATCC BAA-477 / NRRL B-23932 / Pf-5).